The primary structure comprises 629 residues: tRNA uridine 5-carboxymethylaminomethyl modification enzyme MnmG (629 aa).

Residues 13–18 (GGGHAG), Val125, and Ser180 contribute to the FAD site. 273–287 (GPRYCPSIEDKVMRF) contributes to the NAD(+) binding site. Gln370 is an FAD binding site.

Belongs to the MnmG family. In terms of assembly, homodimer. Heterotetramer of two MnmE and two MnmG subunits. The cofactor is FAD.

Its subcellular location is the cytoplasm. Its function is as follows. NAD-binding protein involved in the addition of a carboxymethylaminomethyl (cmnm) group at the wobble position (U34) of certain tRNAs, forming tRNA-cmnm(5)s(2)U34. The sequence is that of tRNA uridine 5-carboxymethylaminomethyl modification enzyme MnmG from Klebsiella pneumoniae subsp. pneumoniae (strain ATCC 700721 / MGH 78578).